The sequence spans 147 residues: Ribonuclease pancreatic gamma-type (147 aa).

A signal peptide spans 1–25 (MGLEKSFLLFSLLVLVLGWVQPSLG). 2 residues coordinate substrate: Lys35 and Arg38. His40 (proton acceptor) is an active-site residue. Intrachain disulfides connect Cys54–Cys112, Cys68–Cys123, Cys86–Cys138, and Cys93–Cys100. Residues 69–73 (KPMNT), Lys94, and Arg113 each bind substrate. His142 functions as the Proton donor in the catalytic mechanism.

Belongs to the pancreatic ribonuclease family. Monomer.

It is found in the secreted. It carries out the reaction an [RNA] containing cytidine + H2O = an [RNA]-3'-cytidine-3'-phosphate + a 5'-hydroxy-ribonucleotide-3'-[RNA].. The catalysed reaction is an [RNA] containing uridine + H2O = an [RNA]-3'-uridine-3'-phosphate + a 5'-hydroxy-ribonucleotide-3'-[RNA].. In terms of biological role, endonuclease that catalyzes the cleavage of RNA on the 3' side of pyrimidine nucleotides. Acts on single-stranded and double-stranded RNA. The sequence is that of Ribonuclease pancreatic gamma-type from Rattus rattus (Black rat).